A 244-amino-acid polypeptide reads, in one-letter code: MNGPADGEVDYKKKYRNLKRKLKFLIYEHECFQEELRKAQRKLLKVSRDKSFLLDRLLQYENVDEDSSDSDATASSDNSETEGTPKLSDTPAPKRKRSPPLGGAPSPSSLSLPPSTGFPLQASRAPSPYLSSLASPTYPPFPSDYLALQLPEPSPLRPKREKRPRLPRKLKMAVGPPDCPVGGPLTFPGRGSGAGVGAALAPLPPPKMPPPTILSAVPRQMFSDAGSGDDALDGDDDLVIDIPE.

Residues 10–54 (DYKKKYRNLKRKLKFLIYEHECFQEELRKAQRKLLKVSRDKSFLL) are a coiled coil. Disordered stretches follow at residues 59-187 (QYEN…PLTF) and 222-244 (FSDA…DIPE). Low complexity-rich tracts occupy residues 99-115 (PPLG…LPPS) and 122-136 (ASRA…LASP). Basic residues predominate over residues 157–171 (RPKREKRPRLPRKLK). Glycyl lysine isopeptide (Lys-Gly) (interchain with G-Cter in SUMO2) cross-links involve residues Lys159 and Lys171. Acidic residues predominate over residues 230-244 (DALDGDDDLVIDIPE).

As to quaternary structure, component of the chromatin remodeling INO80 complex; specifically part of a complex module associated with the N-terminus of INO80.

Its subcellular location is the nucleus. Its function is as follows. Putative regulatory component of the chromatin remodeling INO80 complex which is involved in transcriptional regulation, DNA replication and probably DNA repair. The sequence is that of INO80 complex subunit E (INO80E) from Bos taurus (Bovine).